Here is a 310-residue protein sequence, read N- to C-terminus: p-hydroxybenzoic acid efflux pump subunit AaeA (310 aa).

A helical transmembrane segment spans residues 12-32 (AITLVLVILAFIAIFRAWVYY).

The protein belongs to the membrane fusion protein (MFP) (TC 8.A.1) family.

Its subcellular location is the cell inner membrane. Its function is as follows. Forms an efflux pump with AaeB. This is p-hydroxybenzoic acid efflux pump subunit AaeA from Salmonella gallinarum (strain 287/91 / NCTC 13346).